A 1052-amino-acid chain; its full sequence is uncharacterized protein (1052 aa).

The 173-residue stretch at 389–561 folds into the Helicase ATP-binding domain; sequence WINKGKTFAI…NKGGNYIMIN (173 aa). 400 to 407 is a binding site for ATP; that stretch reads SAMGTGKT.

This sequence belongs to the mimivirus R1 family.

This is an uncharacterized protein from Acanthamoeba polyphaga mimivirus (APMV).